A 483-amino-acid polypeptide reads, in one-letter code: Regulatory protein ViaA (483 aa).

It belongs to the ViaA family. In terms of assembly, homodimer. Interacts with RavA.

The protein localises to the cytoplasm. Component of the RavA-ViaA chaperone complex, which may act on the membrane to optimize the function of some of the respiratory chains. ViaA stimulates the ATPase activity of RavA. The chain is Regulatory protein ViaA from Shigella sonnei (strain Ss046).